The chain runs to 119 residues: Large ribosomal subunit protein bL20 (119 aa).

The protein belongs to the bacterial ribosomal protein bL20 family.

In terms of biological role, binds directly to 23S ribosomal RNA and is necessary for the in vitro assembly process of the 50S ribosomal subunit. It is not involved in the protein synthesizing functions of that subunit. This Bradyrhizobium diazoefficiens (strain JCM 10833 / BCRC 13528 / IAM 13628 / NBRC 14792 / USDA 110) protein is Large ribosomal subunit protein bL20.